The sequence spans 102 residues: Small ribosomal subunit protein bS6 (102 aa).

It belongs to the bacterial ribosomal protein bS6 family.

Its function is as follows. Binds together with bS18 to 16S ribosomal RNA. This is Small ribosomal subunit protein bS6 (rpsF) from Deinococcus radiodurans (strain ATCC 13939 / DSM 20539 / JCM 16871 / CCUG 27074 / LMG 4051 / NBRC 15346 / NCIMB 9279 / VKM B-1422 / R1).